A 333-amino-acid chain; its full sequence is MKWKKLSLETTTEAVDLVCDMLLSLGIEGIEVVDKVPITEEEKKRMFIDILPELGEDDGIATINFYLENEEDLPSLKVSIQEGLDELRDFVEVGSGKLSLSETEDKDWINNWKEFFKPFRVDDTIVIKPTWEKLEERKETDLVIEIDPGTAFGTGAHETTKLCILNIKKYMQPGATLLDVGCGSGILTIIGRKLGAKTAVAIDIDENAVSASKENCDVNQLEAVLCQSSDSSTRTEGRIELFDGNVIEDRGLRERIGLNSYDFVVANILADIIIPLSAVVGEFMKPGAYFISSGIIDMKAEEVKEAILRNGFIIEEITTMGDWTSIVAKKPNK.

S-adenosyl-L-methionine contacts are provided by threonine 160, glycine 181, aspartate 203, and asparagine 267.

This sequence belongs to the methyltransferase superfamily. PrmA family.

It is found in the cytoplasm. It carries out the reaction L-lysyl-[protein] + 3 S-adenosyl-L-methionine = N(6),N(6),N(6)-trimethyl-L-lysyl-[protein] + 3 S-adenosyl-L-homocysteine + 3 H(+). In terms of biological role, methylates ribosomal protein L11. In Lachnoclostridium phytofermentans (strain ATCC 700394 / DSM 18823 / ISDg) (Clostridium phytofermentans), this protein is Ribosomal protein L11 methyltransferase.